Here is a 108-residue protein sequence, read N- to C-terminus: Nucleoid-associated protein BP1550 (108 aa).

The segment at S87 to F108 is disordered. Residues P99–F108 show a composition bias toward pro residues.

Belongs to the YbaB/EbfC family. As to quaternary structure, homodimer.

Its subcellular location is the cytoplasm. The protein localises to the nucleoid. Its function is as follows. Binds to DNA and alters its conformation. May be involved in regulation of gene expression, nucleoid organization and DNA protection. The protein is Nucleoid-associated protein BP1550 of Bordetella pertussis (strain Tohama I / ATCC BAA-589 / NCTC 13251).